The primary structure comprises 51 residues: uncharacterized protein (51 aa).

This is an uncharacterized protein from Dictyostelium discoideum (Social amoeba).